Reading from the N-terminus, the 436-residue chain is tRNA-2-methylthio-N(6)-dimethylallyladenosine synthase (436 aa).

An MTTase N-terminal domain is found at 5–121 (RKLFIKTYGC…LPDMLERTEG (117 aa)). 6 residues coordinate [4Fe-4S] cluster: Cys14, Cys50, Cys84, Cys158, Cys162, and Cys165. The Radical SAM core domain maps to 144–374 (ATRGPAAFLT…TEQQRAAQMA (231 aa)). The region spanning 373 to 435 (MAMVGREVGV…PNSLAGERLG (63 aa)) is the TRAM domain.

The protein belongs to the methylthiotransferase family. MiaB subfamily. As to quaternary structure, monomer. [4Fe-4S] cluster serves as cofactor.

The protein localises to the cytoplasm. The catalysed reaction is N(6)-dimethylallyladenosine(37) in tRNA + (sulfur carrier)-SH + AH2 + 2 S-adenosyl-L-methionine = 2-methylsulfanyl-N(6)-dimethylallyladenosine(37) in tRNA + (sulfur carrier)-H + 5'-deoxyadenosine + L-methionine + A + S-adenosyl-L-homocysteine + 2 H(+). In terms of biological role, catalyzes the methylthiolation of N6-(dimethylallyl)adenosine (i(6)A), leading to the formation of 2-methylthio-N6-(dimethylallyl)adenosine (ms(2)i(6)A) at position 37 in tRNAs that read codons beginning with uridine. This chain is tRNA-2-methylthio-N(6)-dimethylallyladenosine synthase, found in Cereibacter sphaeroides (strain ATCC 17023 / DSM 158 / JCM 6121 / CCUG 31486 / LMG 2827 / NBRC 12203 / NCIMB 8253 / ATH 2.4.1.) (Rhodobacter sphaeroides).